Here is a 132-residue protein sequence, read N- to C-terminus: Insulin-like 3 (132 aa).

A signal peptide spans 1–21 (MDRRPLTWALVLLGPALAIAL). Position 27 is a pyrrolidone carboxylic acid (Q27). 3 cysteine pairs are disulfide-bonded: C34–C117, C46–C130, and C116–C121. Positions 67-104 (LLRWLEGQHLLHGLMASGDPVLVLAPQPLPQASRHHHH) are cleaved as a propeptide — c peptide like.

It belongs to the insulin family. As to quaternary structure, heterodimer of a B chain and an A chain linked by two disulfide bonds. 20% of B chains include an extra N-terminal pentapeptide. As to expression, expressed exclusively in Leydig cells of the testis.

It localises to the secreted. Its function is as follows. Seems to play a role in testicular function. May be a trophic hormone with a role in testicular descent in fetal life. Is a ligand for LGR8 receptor. This is Insulin-like 3 (INSL3) from Bos taurus (Bovine).